Consider the following 322-residue polypeptide: Replication factor C small subunit (322 aa).

ATP is bound at residue 46 to 53 (GSAGIGKT).

Belongs to the activator 1 small subunits family. RfcS subfamily. In terms of assembly, heteromultimer composed of small subunits (RfcS) and large subunits (RfcL).

Part of the RFC clamp loader complex which loads the PCNA sliding clamp onto DNA. This Methanoculleus marisnigri (strain ATCC 35101 / DSM 1498 / JR1) protein is Replication factor C small subunit.